A 670-amino-acid polypeptide reads, in one-letter code: Protein HBS1 (670 aa).

2 disordered regions span residues 60 to 88 (KDIQ…ESFQ) and 164 to 202 (KTVS…VSGR). Positions 63 to 75 (QEEEADEDEDEDA) are enriched in acidic residues. The span at 189 to 200 (PSPKVPSSPVVS) shows a compositional bias: low complexity. The 224-residue stretch at 245–468 (KSHIHMIVIG…DVIENFKIPE (224 aa)) folds into the tr-type G domain. Residues 254-261 (GHVDAGKS) form a G1 region. 254 to 261 (GHVDAGKS) lines the GTP pocket. Residues 310-314 (GITMD) are G2. The tract at residues 331 to 334 (DAPG) is G3. GTP is bound by residues 393–396 (NKLD) and 432–434 (SGL). Positions 393–396 (NKLD) are G4. The tract at residues 432 to 434 (SGL) is G5.

This sequence belongs to the TRAFAC class translation factor GTPase superfamily. Classic translation factor GTPase family. In terms of assembly, component of the Pelota-HBS1L complex, also named Dom34-Hbs1 complex, composed of pelo and HBS1. As to expression, expressed in ovaries (at protein level).

Its subcellular location is the cytoplasm. It catalyses the reaction GTP + H2O = GDP + phosphate + H(+). Functionally, GTPase component of the Pelota-HBS1L complex, a complex that recognizes stalled ribosomes and triggers the No-Go Decay (NGD) pathway. The Pelota-HBS1L complex recognizes ribosomes stalled at the 3' end of an mRNA and engages stalled ribosomes by destabilizing mRNA in the mRNA channel. Following ribosome-binding, the Pelota-HBS1L complex promotes recruitment of pix, which drives the disassembly of stalled ribosomes, followed by degradation of damaged mRNAs as part of the NGD pathway. Together with pelo, required for transposon silencing in the ovary and testis. Together with pelo, promotes meiosis and spermatid individualization during spermatogenesis. The protein is Protein HBS1 of Drosophila melanogaster (Fruit fly).